A 708-amino-acid chain; its full sequence is Pre-mRNA-splicing factor SPP382 (708 aa).

The G-patch domain maps to 61-108; the sequence is TYGIGAKLLSSMGYVAGKGLGKDGSGITTPIETQSRPMHNAGLGMFSN.

As to quaternary structure, component of the NTR complex (NTC-related complex), composed of NTR1, NTR2 and PRP43. Interacts with CLF1 and NTR2. Interacts with PRP43 and PRP45.

The protein localises to the cytoplasm. It localises to the nucleus. Its function is as follows. Involved in pre-mRNA splicing and spliceosome disassembly. Promotes release of excised lariat intron from the spliceosome by acting as a receptor for PRP43. This targeting of PRP43 leads to disassembly of the spliceosome with the separation of the U2, U5, U6 snRNPs and the NTC complex. The protein is Pre-mRNA-splicing factor SPP382 (SPP382) of Saccharomyces cerevisiae (strain ATCC 204508 / S288c) (Baker's yeast).